A 100-amino-acid chain; its full sequence is Aspartyl/glutamyl-tRNA(Asn/Gln) amidotransferase subunit C (100 aa).

It belongs to the GatC family. In terms of assembly, heterotrimer of A, B and C subunits.

The enzyme catalyses L-glutamyl-tRNA(Gln) + L-glutamine + ATP + H2O = L-glutaminyl-tRNA(Gln) + L-glutamate + ADP + phosphate + H(+). The catalysed reaction is L-aspartyl-tRNA(Asn) + L-glutamine + ATP + H2O = L-asparaginyl-tRNA(Asn) + L-glutamate + ADP + phosphate + 2 H(+). Allows the formation of correctly charged Asn-tRNA(Asn) or Gln-tRNA(Gln) through the transamidation of misacylated Asp-tRNA(Asn) or Glu-tRNA(Gln) in organisms which lack either or both of asparaginyl-tRNA or glutaminyl-tRNA synthetases. The reaction takes place in the presence of glutamine and ATP through an activated phospho-Asp-tRNA(Asn) or phospho-Glu-tRNA(Gln). This chain is Aspartyl/glutamyl-tRNA(Asn/Gln) amidotransferase subunit C, found in Streptococcus suis (strain 98HAH33).